Consider the following 419-residue polypeptide: ATP phosphoribosyltransferase regulatory subunit (419 aa).

The protein belongs to the class-II aminoacyl-tRNA synthetase family. HisZ subfamily. As to quaternary structure, heteromultimer composed of HisG and HisZ subunits.

The protein resides in the cytoplasm. The protein operates within amino-acid biosynthesis; L-histidine biosynthesis; L-histidine from 5-phospho-alpha-D-ribose 1-diphosphate: step 1/9. In terms of biological role, required for the first step of histidine biosynthesis. May allow the feedback regulation of ATP phosphoribosyltransferase activity by histidine. This chain is ATP phosphoribosyltransferase regulatory subunit, found in Ruminiclostridium cellulolyticum (strain ATCC 35319 / DSM 5812 / JCM 6584 / H10) (Clostridium cellulolyticum).